Consider the following 629-residue polypeptide: Chaperone protein HtpG (629 aa).

The a; substrate-binding stretch occupies residues M1–R337. The tract at residues E338 to Q554 is b. The c stretch occupies residues L555 to G629.

Belongs to the heat shock protein 90 family. As to quaternary structure, homodimer.

It localises to the cytoplasm. In terms of biological role, molecular chaperone. Has ATPase activity. This Acidithiobacillus ferrooxidans (strain ATCC 23270 / DSM 14882 / CIP 104768 / NCIMB 8455) (Ferrobacillus ferrooxidans (strain ATCC 23270)) protein is Chaperone protein HtpG.